Consider the following 323-residue polypeptide: MSDNLVLPTYDDVASASERIKKFANKTPVLTSSTVNKEFVAEVFFKCENFQKMGAFKFRGALNALSQLNEAQRKAGVLTFSSGNHAQAIALSAKILGIPAKIIMPLDAPEAKVAATKGYGGQVIMYDRYKDDREKMAKEISEREGLTIIPPYDHPHVLAGQGTAAKELFEEVGPLDALFVCLGGGGLLSGSALAARHFAPNCEVYGVEPEAGNDGQQSFRKGSIVHIDTPKTIADGAQTQHLGNYTFSIIKEKVDDILTVSDEELIDCLKFYAARMKIVVEPTGCLSFAAARAMKEKLKNKRIGIIISGGNVDIERYAHFLSQ.

Ser-32, Ser-33, and Lys-52 together coordinate ATP. Lys-57 serves as the catalytic Proton acceptor. Lys-57 carries the lysino-D-alanine (Lys); alternate modification. N6-(pyridoxal phosphate)lysine; alternate is present on Lys-57. Residue Thr-79 participates in Ca(2+) binding. Ser-82 serves as the catalytic Proton acceptor. Asn-84 serves as a coordination point for pyridoxal 5'-phosphate. ATP contacts are provided by Gln-87 and Tyr-119. Asp-176 lines the Mg(2+) pocket. Pyridoxal 5'-phosphate-binding residues include Gly-183, Gly-184, Gly-185, Gly-186, and Leu-187. 3 residues coordinate Ca(2+): Glu-208, Gly-212, and Asp-214. Residues Glu-208, Gly-212, and Asp-214 each contribute to the Mg(2+) site. The Mn(2+) site is built by Glu-208, Gly-212, and Asp-214. Lys-277 is a binding site for ATP. Ser-308 contacts pyridoxal 5'-phosphate. An ATP-binding site is contributed by Asn-311.

It belongs to the serine/threonine dehydratase family. As to quaternary structure, homodimer. Mg(2+) serves as cofactor. The cofactor is Mn(2+). It depends on Ca(2+) as a cofactor. Requires pyridoxal 5'-phosphate as cofactor. Modification of the active site Lys by its substrate Ser to lysino-D-alanine reduces but does not abolish enzyme activity.

It carries out the reaction L-serine = D-serine. The catalysed reaction is L-serine = pyruvate + NH4(+). The enzyme catalyses D-serine = pyruvate + NH4(+). Its activity is regulated as follows. Allosterically activated by ATP, by magnesium, and possibly also by other divalent metal cations. Catalyzes the synthesis of D-serine from L-serine. Has dehydratase activity towards both L-serine and D-serine. This Schizosaccharomyces pombe (strain 972 / ATCC 24843) (Fission yeast) protein is Serine racemase.